We begin with the raw amino-acid sequence, 340 residues long: Aldose 1-epimerase (340 aa).

Substrate is bound at residue Arg77. The active-site Proton donor is the His172. Asp243 is a binding site for substrate. Catalysis depends on Glu305, which acts as the Proton acceptor.

Belongs to the aldose epimerase family.

The protein resides in the cytoplasm. It catalyses the reaction alpha-D-glucose = beta-D-glucose. The protein operates within carbohydrate metabolism; hexose metabolism. In terms of biological role, mutarotase converts alpha-aldose to the beta-anomer. It is active on D-glucose, L-arabinose, D-xylose, D-galactose, maltose and lactose. This Haemophilus influenzae (strain ATCC 51907 / DSM 11121 / KW20 / Rd) protein is Aldose 1-epimerase (galM).